A 190-amino-acid polypeptide reads, in one-letter code: Prostaglandin-H2 D-isomerase (190 aa).

Positions 1 to 22 (MATHHTLWMGLALLGVLGDLQA) are cleaved as a signal peptide. The O-linked (GalNAc...) serine glycan is linked to Ser29. An N-linked (GlcNAc...) (complex) asparagine glycan is attached at Asn51. The active-site Nucleophile is Cys65. An N-linked (GlcNAc...) (complex) asparagine glycan is attached at Asn78. A disulfide bridge links Cys89 with Cys186.

It belongs to the calycin superfamily. Lipocalin family. Monomer. In terms of processing, N- and O-glycosylated. Both N-glycosylation recognition sites are almost quantitatively occupied by N-glycans of the biantennary complex type, with a considerable proportion of structures bearing a bisecting GlcNAc. N-glycan at Asn-78: dHex1Hex5HexNAc4. Agalacto structure as well as sialylated and nonsialylated oligosaccharides bearing alpha2-3- and/or alpha2-6-linked NeuNAc are present. As to expression, abundant in the brain and CNS, where it is expressed in tissues of the blood-brain barrier and secreted into the cerebro-spinal fluid. Abundantly expressed in the heart. In the male reproductive system, it is expressed in the testis, epididymis and prostate, and is secreted into the seminal fluid. Expressed in the eye and secreted into the aqueous humor. Lower levels detected in various tissue fluids such as serum, normal urine, ascitic fluid and tear fluid. Also found in a number of other organs including ovary, fimbriae of the fallopian tubes, kidney, leukocytes.

It localises to the rough endoplasmic reticulum. It is found in the nucleus membrane. Its subcellular location is the golgi apparatus. The protein localises to the cytoplasm. The protein resides in the perinuclear region. It localises to the secreted. The enzyme catalyses prostaglandin H2 = prostaglandin D2. Catalyzes the conversion of PGH2 to PGD2, a prostaglandin involved in smooth muscle contraction/relaxation and a potent inhibitor of platelet aggregation. Involved in a variety of CNS functions, such as sedation, NREM sleep and PGE2-induced allodynia, and may have an anti-apoptotic role in oligodendrocytes. Binds small non-substrate lipophilic molecules, including biliverdin, bilirubin, retinal, retinoic acid and thyroid hormone, and may act as a scavenger for harmful hydrophobic molecules and as a secretory retinoid and thyroid hormone transporter. Possibly involved in development and maintenance of the blood-brain, blood-retina, blood-aqueous humor and blood-testis barrier. It is likely to play important roles in both maturation and maintenance of the central nervous system and male reproductive system. Involved in PLA2G3-dependent maturation of mast cells. PLA2G3 is secreted by immature mast cells and acts on nearby fibroblasts upstream to PTDGS to synthesize PGD2, which in turn promotes mast cell maturation and degranulation via PTGDR. This chain is Prostaglandin-H2 D-isomerase (PTGDS), found in Homo sapiens (Human).